Here is a 101-residue protein sequence, read N- to C-terminus: Large ribosomal subunit protein bL21 (101 aa).

It belongs to the bacterial ribosomal protein bL21 family. As to quaternary structure, part of the 50S ribosomal subunit. Contacts protein L20.

Its function is as follows. This protein binds to 23S rRNA in the presence of protein L20. In Corynebacterium glutamicum (strain R), this protein is Large ribosomal subunit protein bL21.